The chain runs to 310 residues: Thioredoxin reductase (310 aa).

34 to 41 (NGMQPGGQ) is an FAD binding site. A disulfide bridge connects residues Cys135 and Cys138. Position 281-290 (281-290 (DVQDKIYRQA)) interacts with FAD.

Belongs to the class-II pyridine nucleotide-disulfide oxidoreductase family. Homodimer. FAD serves as cofactor.

It localises to the cytoplasm. It catalyses the reaction [thioredoxin]-dithiol + NADP(+) = [thioredoxin]-disulfide + NADPH + H(+). The sequence is that of Thioredoxin reductase (trxB) from Rickettsia prowazekii (strain Madrid E).